The sequence spans 213 residues: Orotate phosphoribosyltransferase (213 aa).

Lys-26 serves as a coordination point for 5-phospho-alpha-D-ribose 1-diphosphate. 34-35 (FF) serves as a coordination point for orotate. 5-phospho-alpha-D-ribose 1-diphosphate is bound by residues 72–73 (YK), Arg-99, Lys-100, Lys-103, His-105, and 124–132 (DDVITAGTA). Residues Thr-128 and Arg-156 each contribute to the orotate site.

The protein belongs to the purine/pyrimidine phosphoribosyltransferase family. PyrE subfamily. Homodimer. Requires Mg(2+) as cofactor.

It catalyses the reaction orotidine 5'-phosphate + diphosphate = orotate + 5-phospho-alpha-D-ribose 1-diphosphate. The protein operates within pyrimidine metabolism; UMP biosynthesis via de novo pathway; UMP from orotate: step 1/2. In terms of biological role, catalyzes the transfer of a ribosyl phosphate group from 5-phosphoribose 1-diphosphate to orotate, leading to the formation of orotidine monophosphate (OMP). This Cronobacter sakazakii (strain ATCC BAA-894) (Enterobacter sakazakii) protein is Orotate phosphoribosyltransferase.